The sequence spans 1283 residues: Oxysterol-binding protein homolog 2 (1283 aa).

The residue at position 2 (Ser-2) is an N-acetylserine. Position 7 is a phosphoserine (Ser-7). ANK repeat units lie at residues 106–134 (NGNT…SIND) and 206–235 (TGTT…EATV). A PH domain is found at 289 to 386 (PPTYKGFLKK…WVNAIQSAIR (98 aa)). Phosphoserine occurs at positions 422, 445, 451, 455, 458, 459, and 486. Thr-488 is subject to Phosphothreonine. Polar residues-rich tracts occupy residues 504–518 (SNTL…SGSG) and 530–551 (ANLS…NNYI). Disordered stretches follow at residues 504-571 (SNTL…LGIN) and 702-721 (TAGN…DTTA). Phosphoserine occurs at positions 512 and 515. The span at 554-568 (FEGDEANSDDEEEDL) shows a compositional bias: acidic residues. Over residues 707–716 (ESLENDKEQE) the composition is skewed to basic and acidic residues. Ser-717 is subject to Phosphoserine. The FFAT signature appears at 745–751 (EFYDAAE). Positions 767-834 (STAAAPKHAP…SLKNFKAEDK (68 aa)) are disordered. Thr-783 is subject to Phosphothreonine. A Phosphoserine modification is found at Ser-787. Basic and acidic residues-rich tracts occupy residues 791 to 810 (QDEK…KFEK) and 818 to 834 (DEPK…AEDK). 2 positions are modified to phosphoserine: Ser-825 and Ser-1151. Positions 897 to 1268 (SLWAVLKSMV…KYWRYTGKYW (372 aa)) are OSBP-related domain (ORD).

It belongs to the OSBP family. In terms of assembly, interacts with SCS2.

It is found in the cell membrane. It localises to the endoplasmic reticulum membrane. Its function is as follows. Lipid transport protein (LTP) involved in non-vesicular transfer of lipids between membranes. Functions in phosphoinositide-coupled directional transport of various lipids by carrying the lipid molecule in a hydrophobic pocket and transferring it between membranes through the cytosol. Involved in maintenance of intracellular sterol distribution and homeostasis. Binds and transports sterol. Plays a role in the positive regulation of vesicular transport of ceramide from the ER to the Golgi, negatively regulating COPII-mediated ER export of cargos. This is Oxysterol-binding protein homolog 2 from Saccharomyces cerevisiae (strain ATCC 204508 / S288c) (Baker's yeast).